Here is a 358-residue protein sequence, read N- to C-terminus: Very long chain fatty acid elongase AAEL008004 (358 aa).

7 consecutive transmembrane segments (helical) span residues Trp26–Val46, Leu66–Ile86, Ala115–Met135, Val147–Gly167, Phe171–Ala191, Thr207–Ile227, and Ala234–Tyr254. The span at Ser285–Thr295 shows a compositional bias: polar residues. Residues Ser285 to Leu322 form a disordered region. The span at His299–Ser310 shows a compositional bias: basic residues. A compositionally biased stretch (polar residues) spans Asn311–Leu322.

The protein belongs to the ELO family.

Its subcellular location is the membrane. It carries out the reaction a very-long-chain acyl-CoA + malonyl-CoA + H(+) = a very-long-chain 3-oxoacyl-CoA + CO2 + CoA. Could be implicated in synthesis of very long chain fatty acids. In Aedes aegypti (Yellowfever mosquito), this protein is Very long chain fatty acid elongase AAEL008004.